Consider the following 519-residue polypeptide: Probable U3 small nucleolar RNA-associated protein 18 (519 aa).

WD repeat units follow at residues 26–66, 71–111, 216–254, 259–298, 306–345, 347–386, 390–429, 438–479, and 485–519; these read DKEN…MFDT, GAKD…RLMI, SHSG…NPLV, LRSS…VQKV, NFQP…FATS, KIEG…VVRR, QDGV…ADAA, NITF…VFRN, and TPLG…AHYD.

This sequence belongs to the WD repeat UTP18 family. As to quaternary structure, component of the ribosomal small subunit (SSU) processome.

It is found in the nucleus. The protein localises to the nucleolus. Involved in nucleolar processing of pre-18S ribosomal RNA. In Schizosaccharomyces pombe (strain 972 / ATCC 24843) (Fission yeast), this protein is Probable U3 small nucleolar RNA-associated protein 18.